An 85-amino-acid chain; its full sequence is Small ribosomal subunit protein uS17 (85 aa).

The protein belongs to the universal ribosomal protein uS17 family. Part of the 30S ribosomal subunit.

Functionally, one of the primary rRNA binding proteins, it binds specifically to the 5'-end of 16S ribosomal RNA. This Natranaerobius thermophilus (strain ATCC BAA-1301 / DSM 18059 / JW/NM-WN-LF) protein is Small ribosomal subunit protein uS17.